The chain runs to 65 residues: Gallinacin-12 (65 aa).

An N-terminal signal peptide occupies residues 1-19 (MRNLCFVFIFISLLAHGST). 3 disulfides stabilise this stretch: Cys25–Cys54, Cys32–Cys47, and Cys37–Cys55.

Belongs to the beta-defensin family. As to expression, expressed in the large intestine, kidney liver, gall bladder, testis, ovary and male and female reproductive tracts. Expressed in the ovarian stroma and the theca and granulosa layers of the ovarian follicle.

Its subcellular location is the secreted. The protein localises to the cytoplasmic granule. Functionally, has bactericidal activity. This Gallus gallus (Chicken) protein is Gallinacin-12 (GAL12).